The chain runs to 776 residues: Isoamylase (776 aa).

The first 26 residues, 1–26, serve as a signal peptide directing secretion; it reads MKCPKILAALLGCAVLAGVPAMPAHA. 5 residues coordinate Ca(2+): Asp154, Glu255, Thr256, Asn258, and Asp285. Asp401 acts as the Nucleophile in catalysis. Cys410 and Cys422 form a disulfide bridge. Glu461 (proton donor) is an active-site residue. 2 disulfide bridges follow: Cys546-Cys616 and Cys738-Cys766.

This sequence belongs to the glycosyl hydrolase 13 family. In terms of assembly, monomer. Ca(2+) serves as cofactor.

The catalysed reaction is Hydrolysis of (1-&gt;6)-alpha-D-glucosidic branch linkages in glycogen, amylopectin and their beta-limit dextrins.. The chain is Isoamylase (iam) from Pseudomonas sp. (strain SMP1).